A 258-amino-acid chain; its full sequence is Imidazole glycerol phosphate synthase subunit HisF (258 aa).

Residues D11 and D130 contribute to the active site.

Belongs to the HisA/HisF family. As to quaternary structure, heterodimer of HisH and HisF.

The protein localises to the cytoplasm. The enzyme catalyses 5-[(5-phospho-1-deoxy-D-ribulos-1-ylimino)methylamino]-1-(5-phospho-beta-D-ribosyl)imidazole-4-carboxamide + L-glutamine = D-erythro-1-(imidazol-4-yl)glycerol 3-phosphate + 5-amino-1-(5-phospho-beta-D-ribosyl)imidazole-4-carboxamide + L-glutamate + H(+). The protein operates within amino-acid biosynthesis; L-histidine biosynthesis; L-histidine from 5-phospho-alpha-D-ribose 1-diphosphate: step 5/9. IGPS catalyzes the conversion of PRFAR and glutamine to IGP, AICAR and glutamate. The HisF subunit catalyzes the cyclization activity that produces IGP and AICAR from PRFAR using the ammonia provided by the HisH subunit. The polypeptide is Imidazole glycerol phosphate synthase subunit HisF (Xanthomonas oryzae pv. oryzae (strain MAFF 311018)).